The primary structure comprises 421 residues: N-succinylarginine dihydrolase (421 aa).

Substrate contacts are provided by residues 19–28 (AGLSLGNLAS), Asn105, and 132–133 (HR). Glu167 is a catalytic residue. Arg199 is a binding site for substrate. His235 is a catalytic residue. Substrate contacts are provided by Asp237 and Asn346. Cys352 acts as the Nucleophile in catalysis.

This sequence belongs to the succinylarginine dihydrolase family. Homodimer.

It catalyses the reaction N(2)-succinyl-L-arginine + 2 H2O + 2 H(+) = N(2)-succinyl-L-ornithine + 2 NH4(+) + CO2. The protein operates within amino-acid degradation; L-arginine degradation via AST pathway; L-glutamate and succinate from L-arginine: step 2/5. Functionally, catalyzes the hydrolysis of N(2)-succinylarginine into N(2)-succinylornithine, ammonia and CO(2). This Novosphingobium aromaticivorans (strain ATCC 700278 / DSM 12444 / CCUG 56034 / CIP 105152 / NBRC 16084 / F199) protein is N-succinylarginine dihydrolase.